The sequence spans 467 residues: Indoleacetamide hydrolase (467 aa).

Residues Lys74 and Ser149 each act as charge relay system in the active site. Ser173 (acyl-ester intermediate) is an active-site residue.

This sequence belongs to the amidase family.

The protein operates within plant hormone metabolism; auxin biosynthesis. Its function is as follows. Hydrolyzes indole-3-acetamide (IAM) into indole-3-acetic acid (IAA). This is Indoleacetamide hydrolase (tms2) from Rhizobium radiobacter (Agrobacterium tumefaciens).